A 122-amino-acid chain; its full sequence is Ribosomal protein eL22-like (122 aa).

Serine 112, serine 118, and serine 120 each carry phosphoserine.

This sequence belongs to the eukaryotic ribosomal protein eL22 family.

The polypeptide is Ribosomal protein eL22-like (RPL22L1) (Homo sapiens (Human)).